The following is an 84-amino-acid chain: Anthracycline acyl carrier protein DauA (84 aa).

One can recognise a Carrier domain in the interval 3–80; sequence ELSLAELREI…SMLIFVNERL (78 aa). S40 carries the post-translational modification O-(pantetheine 4'-phosphoryl)serine.

It functions in the pathway antibiotic biosynthesis; daunorubicin biosynthesis. The protein operates within antibiotic biosynthesis; carminomycin biosynthesis. Its pathway is antibiotic biosynthesis; rhodomycin biosynthesis. It participates in antibiotic biosynthesis; aclacinomycin biosynthesis. In terms of biological role, involved in the biosynthesis of aklanonate which is an important precursor common to the formation of the clinically significant anthracyclines such as carminomycin, daunorubicin (daunomycin), rhodomycin, aclacinomycin T (aklavin) and aclacinomycin A (aclarubicin). These compounds are aromatic polyketide antibiotics that exhibit high cytotoxicity and are widely applied in the chemotherapy of a variety of cancers. In Streptomyces sp. (strain C5), this protein is Anthracycline acyl carrier protein DauA (dauA).